The primary structure comprises 242 residues: MGHKINPTGLRLGITQEHRSRWYASSKNYPALLQEDDRIRKFIHKKYGSAGISDVLIARKADQLEVELKTARPGVLVGRQGSGIEELRSGIQKTIGDSSRQVRINVVEVERVDGDAFLLAEYIAQQLEKRVAFRRTIRMAVQRAQRAGVLGLKIQVSGRLNGAEIARTEWTREGRVPLHTLRADIDYATKVASTTYGVLGIKVWVFKGEVLSEQAQPMPVGAAPRRRASRRPQQFEDRSNEG.

One can recognise a KH type-2 domain in the interval 39–110; it reads IRKFIHKKYG…QVRINVVEVE (72 aa). Residues 216–242 are disordered; it reads QPMPVGAAPRRRASRRPQQFEDRSNEG. Positions 233–242 are enriched in basic and acidic residues; that stretch reads QQFEDRSNEG.

The protein belongs to the universal ribosomal protein uS3 family. Part of the 30S ribosomal subunit. Forms a tight complex with proteins S10 and S14.

In terms of biological role, binds the lower part of the 30S subunit head. Binds mRNA in the 70S ribosome, positioning it for translation. The sequence is that of Small ribosomal subunit protein uS3 from Synechococcus sp. (strain CC9605).